Here is a 196-residue protein sequence, read N- to C-terminus: Peptidyl-tRNA hydrolase (196 aa).

Tyrosine 19 is a binding site for tRNA. Histidine 24 serves as the catalytic Proton acceptor. The tRNA site is built by tyrosine 68, asparagine 70, and asparagine 116.

This sequence belongs to the PTH family. In terms of assembly, monomer.

It localises to the cytoplasm. It catalyses the reaction an N-acyl-L-alpha-aminoacyl-tRNA + H2O = an N-acyl-L-amino acid + a tRNA + H(+). Its function is as follows. Hydrolyzes ribosome-free peptidyl-tRNAs (with 1 or more amino acids incorporated), which drop off the ribosome during protein synthesis, or as a result of ribosome stalling. Catalyzes the release of premature peptidyl moieties from peptidyl-tRNA molecules trapped in stalled 50S ribosomal subunits, and thus maintains levels of free tRNAs and 50S ribosomes. The chain is Peptidyl-tRNA hydrolase from Aromatoleum aromaticum (strain DSM 19018 / LMG 30748 / EbN1) (Azoarcus sp. (strain EbN1)).